We begin with the raw amino-acid sequence, 583 residues long: Nuclear hormone receptor family member nhr-31 (583 aa).

Residues 43–77 form a disordered region; sequence DLRTSGATSSSGPATSYIIRPSDKQPTVSSGGSQN. Residues 46–58 are compositionally biased toward low complexity; sequence TSGATSSSGPATS. The span at 66–77 shows a compositional bias: polar residues; sequence KQPTVSSGGSQN. Residues 79–154 constitute a DNA-binding region (nuclear receptor); the sequence is DSVCAVCGDG…AGMDPKAVRP (76 aa). 2 NR C4-type zinc fingers span residues 82 to 102 and 118 to 142; these read CAVC…CYGC and CRFS…FQRC. Residues 195–464 form the NR LBD domain; it reads ETRILLMQLM…DNLLAEMFGD (270 aa).

Belongs to the nuclear hormone receptor family.

It is found in the nucleus. Its function is as follows. Orphan nuclear receptor. This chain is Nuclear hormone receptor family member nhr-31 (nhr-31), found in Caenorhabditis elegans.